Here is a 192-residue protein sequence, read N- to C-terminus: 7-methyl-GTP pyrophosphatase (192 aa).

Asp69 (proton acceptor) is an active-site residue.

It belongs to the Maf family. YceF subfamily. Requires a divalent metal cation as cofactor.

The protein resides in the cytoplasm. The enzyme catalyses N(7)-methyl-GTP + H2O = N(7)-methyl-GMP + diphosphate + H(+). Nucleoside triphosphate pyrophosphatase that hydrolyzes 7-methyl-GTP (m(7)GTP). May have a dual role in cell division arrest and in preventing the incorporation of modified nucleotides into cellular nucleic acids. The chain is 7-methyl-GTP pyrophosphatase from Methylobacillus flagellatus (strain ATCC 51484 / DSM 6875 / VKM B-1610 / KT).